Here is a 179-residue protein sequence, read N- to C-terminus: MSSFKEFYTTEVVPKLQETFGYKNVMQIPKLEKIVLNMGLGEAISNIKIIDSAVEELKLISGQQPVIRRARKSIAAFKLRQGMPVGCMVTLRHERMYDFFNKLVNIALPRVRDFRGISGQAFDGQGNYTLGVREQIIFPEIEYDKIDKIKGLNITIVTSVQKDDEARELLRLMGMPFKN.

The protein belongs to the universal ribosomal protein uL5 family. As to quaternary structure, part of the 50S ribosomal subunit; part of the 5S rRNA/L5/L18/L25 subcomplex. Contacts the 5S rRNA and the P site tRNA. Forms a bridge to the 30S subunit in the 70S ribosome.

This is one of the proteins that bind and probably mediate the attachment of the 5S RNA into the large ribosomal subunit, where it forms part of the central protuberance. In the 70S ribosome it contacts protein S13 of the 30S subunit (bridge B1b), connecting the 2 subunits; this bridge is implicated in subunit movement. Contacts the P site tRNA; the 5S rRNA and some of its associated proteins might help stabilize positioning of ribosome-bound tRNAs. In Desulfosudis oleivorans (strain DSM 6200 / JCM 39069 / Hxd3) (Desulfococcus oleovorans), this protein is Large ribosomal subunit protein uL5.